Here is a 427-residue protein sequence, read N- to C-terminus: Flotillin-1 (427 aa).

Phosphoserine occurs at positions 19, 163, and 385. Thr-387 carries the phosphothreonine modification.

The protein belongs to the band 7/mec-2 family. Flotillin subfamily. In terms of assembly, heterooligomeric complex of flotillin-1 and flotillin-2 and caveolin-1 and caveolin-2. Interacts with ECPAS.

Its subcellular location is the cell membrane. It is found in the endosome. It localises to the membrane. The protein resides in the caveola. The protein localises to the melanosome. Its subcellular location is the membrane raft. Functionally, may act as a scaffolding protein within caveolar membranes, functionally participating in formation of caveolae or caveolae-like vesicles. In Macaca mulatta (Rhesus macaque), this protein is Flotillin-1 (FLOT1).